The primary structure comprises 383 residues: Putative glutamate--cysteine ligase 2-1 (383 aa).

It belongs to the glutamate--cysteine ligase type 2 family. YbdK subfamily.

The catalysed reaction is L-cysteine + L-glutamate + ATP = gamma-L-glutamyl-L-cysteine + ADP + phosphate + H(+). ATP-dependent carboxylate-amine ligase which exhibits weak glutamate--cysteine ligase activity. The protein is Putative glutamate--cysteine ligase 2-1 of Legionella pneumophila (strain Corby).